A 181-amino-acid chain; its full sequence is MLFQGFNVVINATTQGVPKIVESLFPNLPNFIAHLLATIILVIVLTKLVYKPYKQMIEKQTQKITEVLSDAIEKQTQANIKIKQANTLLEDAKTESVSILKTARIDAEIQKNKIIDNANLQAKNIQSYAQNSIKQEKIKAQLEIKNTIVNLAINSAEKILNKEIDKNTNKQLIEEFIKELD.

Residues 24-44 traverse the membrane as a helical segment; the sequence is LFPNLPNFIAHLLATIILVIV.

The protein belongs to the ATPase B chain family. F-type ATPases have 2 components, F(1) - the catalytic core - and F(0) - the membrane proton channel. F(1) has five subunits: alpha(3), beta(3), gamma(1), delta(1), epsilon(1). F(0) has three main subunits: a(1), b(2) and c(10-14). The alpha and beta chains form an alternating ring which encloses part of the gamma chain. F(1) is attached to F(0) by a central stalk formed by the gamma and epsilon chains, while a peripheral stalk is formed by the delta and b chains.

The protein resides in the cell membrane. Functionally, f(1)F(0) ATP synthase produces ATP from ADP in the presence of a proton or sodium gradient. F-type ATPases consist of two structural domains, F(1) containing the extramembraneous catalytic core and F(0) containing the membrane proton channel, linked together by a central stalk and a peripheral stalk. During catalysis, ATP synthesis in the catalytic domain of F(1) is coupled via a rotary mechanism of the central stalk subunits to proton translocation. Its function is as follows. Component of the F(0) channel, it forms part of the peripheral stalk, linking F(1) to F(0). The chain is ATP synthase subunit b from Mycoplasma mycoides subsp. mycoides SC (strain CCUG 32753 / NCTC 10114 / PG1).